Reading from the N-terminus, the 488-residue chain is Ribulose bisphosphate carboxylase large chain (488 aa).

Substrate is bound by residues Asn127 and Thr177. Catalysis depends on Lys179, which acts as the Proton acceptor. Lys181 is a substrate binding site. Mg(2+)-binding residues include Lys205, Asp207, and Glu208. Lys205 carries the N6-carboxylysine modification. His297 functions as the Proton acceptor in the catalytic mechanism. Residues Arg298, His330, and Ser382 each coordinate substrate.

It belongs to the RuBisCO large chain family. Type I subfamily. Heterohexadecamer of 8 large chains and 8 small chains. Mg(2+) serves as cofactor.

The protein resides in the plastid. The protein localises to the chloroplast. The enzyme catalyses 2 (2R)-3-phosphoglycerate + 2 H(+) = D-ribulose 1,5-bisphosphate + CO2 + H2O. It carries out the reaction D-ribulose 1,5-bisphosphate + O2 = 2-phosphoglycolate + (2R)-3-phosphoglycerate + 2 H(+). Its function is as follows. RuBisCO catalyzes two reactions: the carboxylation of D-ribulose 1,5-bisphosphate, the primary event in carbon dioxide fixation, as well as the oxidative fragmentation of the pentose substrate in the photorespiration process. Both reactions occur simultaneously and in competition at the same active site. This is Ribulose bisphosphate carboxylase large chain from Antithamnion sp. (Red alga).